A 328-amino-acid chain; its full sequence is Ornithine carbamoyltransferase, catabolic (328 aa).

Carbamoyl phosphate is bound by residues 56 to 59, Gln-83, Arg-107, and 134 to 137; these read STRT and HPTQ. L-ornithine contacts are provided by residues Asn-166, Asp-230, and 234-235; that span reads SM. Carbamoyl phosphate is bound by residues 270-271 and Arg-315; that span reads CL.

It belongs to the aspartate/ornithine carbamoyltransferase superfamily. OTCase family.

It is found in the cytoplasm. The catalysed reaction is carbamoyl phosphate + L-ornithine = L-citrulline + phosphate + H(+). It functions in the pathway amino-acid degradation; L-arginine degradation via ADI pathway; carbamoyl phosphate from L-arginine: step 2/2. Functionally, reversibly catalyzes the transfer of the carbamoyl group from carbamoyl phosphate (CP) to the N(epsilon) atom of ornithine (ORN) to produce L-citrulline. The chain is Ornithine carbamoyltransferase, catabolic (arcB) from Borreliella afzelii (Borrelia afzelii).